We begin with the raw amino-acid sequence, 364 residues long: GMP reductase (364 aa).

Residues 26 to 27 (SR), K78, 132 to 134 (DVA), and 183 to 184 (IG) each bind NADP(+). Residues G184, G186, and C189 each coordinate K(+). The active-site Thioimidate intermediate is the C189. T191 acts as the Proton donor/acceptor in catalysis. A K(+)-binding site is contributed by R192. GMP is bound by residues 222–224 (DGG), 245–246 (GG), 271–273 (GMS), and 289–293 (RASEG). NADP(+) contacts are provided by residues M272, 288 to 289 (YR), and 317 to 320 (SACT).

The protein belongs to the IMPDH/GMPR family. GuaC type 1 subfamily. In terms of assembly, homotetramer.

The enzyme catalyses IMP + NH4(+) + NADP(+) = GMP + NADPH + 2 H(+). In terms of biological role, catalyzes the irreversible NADPH-dependent deamination of GMP to IMP. It functions in the conversion of nucleobase, nucleoside and nucleotide derivatives of G to A nucleotides, and in maintaining the intracellular balance of A and G nucleotides. This Onchocerca volvulus protein is GMP reductase (gmr-1).